The sequence spans 316 residues: Olfactory receptor 51J1 (316 aa).

Residues 1–31 (MKISNNSLGFLPTTFILVGIPGLESEHLWIS) lie on the Extracellular side of the membrane. N-linked (GlcNAc...) asparagine glycosylation is present at asparagine 5. The chain crosses the membrane as a helical span at residues 32-52 (VPFSLIYIIIFLGNGIILHVI). Residues 53–63 (RTDIALHQPMY) are Cytoplasmic-facing. Residues 64–84 (LFLAMLALAEVRVSASTLPTV) form a helical membrane-spanning segment. At 85-104 (LGIFLFGNTEISLEACLFPD) the chain is on the extracellular side. A disulfide bridge links cysteine 100 with cysteine 191. The chain crosses the membrane as a helical span at residues 105-125 (VLHPFFIHDGASCAAGHVFGP). Residues 126–161 (LYSHLQPTELHSYPDTAQGLWHRSYYRTEKHYAHGS) are Cytoplasmic-facing. Residues 162-182 (VAHSLMASALLWPQCPLTFLL) traverse the membrane as a helical segment. The Extracellular segment spans residues 183 to 191 (SAPQSYLSC). A helical transmembrane segment spans residues 192–212 (GNISVNNIYGIFIVTSTFGLD). Residues 213–242 (SLLIVISYGLILHTVLGIATGEGRKKALNT) lie on the Cytoplasmic side of the membrane. The helical transmembrane segment at 243-263 (CGSHVCAVLAYYVPMIGLSIV) threads the bilayer. Residues 264–275 (HRLGHRVSPLLQ) are Extracellular-facing. A helical membrane pass occupies residues 276–296 (AMMANAYLFFPPVVNPIVYSI). The Cytoplasmic segment spans residues 297–316 (KTKEIHGAIVRMLLEKRRRV).

It belongs to the G-protein coupled receptor 1 family.

Its subcellular location is the cell membrane. Functionally, odorant receptor. This is Olfactory receptor 51J1 (OR51J1) from Homo sapiens (Human).